Consider the following 413-residue polypeptide: MNFKEKDPALWGAIADEEQRQEETIELIASENIVSHAVRTAQGSVLTNKYAEGYPGKRYYGGTQYIDVVEQLAIDRAKKLFGAEYANVQPHSGSQANQAVYAAFLKPGDTILGMGLDAGGHLTHGAKVNFSGKLYNSYSYALNPETELLDYDMIRDLARKVKPQLIVAGASAYSRTIDWQAFRSIADEVGAYLMVDMAHIAGLVATGLHPSPVGIADVVTTTTHKTLRGPRGGLILSQAENAKKINSAVFPGTQGGPLEHVIAGKAAAFFEDSQPAFKEYAQQIITNAQAMADEFSQLPTVRVVSGGTDNHLMTLDLSQTALNGKQAQELLDSVLITTNKEAIPNETLSPFKTSGIRLGTPAITTRGFNADESREVARLIVKTLLNPEDEAVLTGVRQRVKELTSAHPLSQLD.

(6S)-5,6,7,8-tetrahydrofolate is bound by residues leucine 116 and 120-122 (GHL). N6-(pyridoxal phosphate)lysine is present on lysine 225. Position 349–351 (349–351 (SPF)) interacts with (6S)-5,6,7,8-tetrahydrofolate.

The protein belongs to the SHMT family. As to quaternary structure, homodimer. Pyridoxal 5'-phosphate is required as a cofactor.

It localises to the cytoplasm. It carries out the reaction (6R)-5,10-methylene-5,6,7,8-tetrahydrofolate + glycine + H2O = (6S)-5,6,7,8-tetrahydrofolate + L-serine. The protein operates within one-carbon metabolism; tetrahydrofolate interconversion. It participates in amino-acid biosynthesis; glycine biosynthesis; glycine from L-serine: step 1/1. Catalyzes the reversible interconversion of serine and glycine with tetrahydrofolate (THF) serving as the one-carbon carrier. This reaction serves as the major source of one-carbon groups required for the biosynthesis of purines, thymidylate, methionine, and other important biomolecules. Also exhibits THF-independent aldolase activity toward beta-hydroxyamino acids, producing glycine and aldehydes, via a retro-aldol mechanism. The chain is Serine hydroxymethyltransferase from Levilactobacillus brevis (strain ATCC 367 / BCRC 12310 / CIP 105137 / JCM 1170 / LMG 11437 / NCIMB 947 / NCTC 947) (Lactobacillus brevis).